The sequence spans 670 residues: Carnitine O-acetyltransferase, mitochondrial (670 aa).

Histidine 378 (proton acceptor) is an active-site residue. CoA is bound by residues lysine 461 and 465–472 (KRHGMSPD). Residue tyrosine 494 participates in (R)-carnitine binding. Residue serine 498 coordinates CoA. Threonine 507 provides a ligand contact to (R)-carnitine. Glutamine 597 contributes to the CoA binding site. Residues 668 to 670 (AKL) carry the Microbody targeting signal motif.

It belongs to the carnitine/choline acetyltransferase family.

It localises to the mitochondrion inner membrane. It is found in the peroxisome. The catalysed reaction is (R)-carnitine + acetyl-CoA = O-acetyl-(R)-carnitine + CoA. In terms of biological role, carnitine acetylase is specific for short chain fatty acids. Carnitine acetylase seems to affect the flux through the pyruvate dehydrogenase complex. It may be involved as well in the transport of acetyl-CoA into mitochondria. This chain is Carnitine O-acetyltransferase, mitochondrial (CAT2), found in Saccharomyces cerevisiae (strain ATCC 204508 / S288c) (Baker's yeast).